The primary structure comprises 209 residues: MEGGGGSGNKTTGGLAGFFGAGGAGYSHADLAGVPLTGMNPLSPYLNVDPRYLVQDTDEFILPTGANKTRGRFELAFFTIGGCCMTGAAFGAMNGLRLGLKETQNMAWSKPRNVQILNMVTRQGALWANTLGSLALLYSAFGVIIEKTRGAEDDLNTVAAGTMTGMLYKCTGGLRGAARGGLAGLTLTGLYALYNNWEHMKGSVLQQSL.

Transmembrane regions (helical) follow at residues 73 to 93 (FELA…FGAM), 125 to 145 (ALWA…GVII), and 172 to 194 (GGLR…YALY).

This sequence belongs to the Tim17/Tim22/Tim23 family. As to quaternary structure, component of the TIM23 complex at least composed of TIMM23, TIMM17 (TIMM17A or TIMM17B) and TIMM50; within this complex, directly interacts with TIMM50. The complex interacts with the TIMM44 component of the PAM complex and with DNAJC15. Upon mitochondrial depolarization, interacts with PINK1; the interaction is required for PINK1 accumulation at the outer mitochondrial membrane, kinase activation by autophosphorylation and PRKN recruitement to mitochondria.

It is found in the mitochondrion inner membrane. Its function is as follows. Essential component of the TIM23 complex, a complex that mediates the translocation of transit peptide-containing proteins across the mitochondrial inner membrane. Has a role in the activation of stress-induced mitophagy by protecting PINK1 from OMA1-mediated degradation and facilitating its accumulation at the outer mitochondrial membrane in response to depolarization. In Bos taurus (Bovine), this protein is Mitochondrial import inner membrane translocase subunit Tim23 (TIMM23).